The primary structure comprises 290 residues: Probable 2-(5''-triphosphoribosyl)-3'-dephosphocoenzyme-A synthase (290 aa).

This sequence belongs to the CitG/MdcB family.

It catalyses the reaction 3'-dephospho-CoA + ATP = 2'-(5''-triphospho-alpha-D-ribosyl)-3'-dephospho-CoA + adenine. In terms of biological role, involved in the formation of 2-(5''-phosphoribosyl)-3'-dephosphocoenzyme-A, the prosthetic group of the acyl-carrier protein of the malonate decarboxylase. The protein is Probable 2-(5''-triphosphoribosyl)-3'-dephosphocoenzyme-A synthase of Pseudomonas fluorescens (strain Pf0-1).